The following is a 686-amino-acid chain: XK-related protein 5 (686 aa).

5 helical membrane passes run 33–53 (LLWGWLALAVLLPGFLVQALS), 205–225 (HFWVFVVAGAHWLVMTFWLVA), 239–259 (LFNLLVGAVYILCYLSFWDSP), 265–285 (VTFYMVMLLENTILLLLATDF), and 297–317 (IAGVLSGFLIGSVSLVIYYSL). Disordered regions lie at residues 340 to 362 (DKTERRASPRATDLAGKRTESSG), 444 to 470 (LQRKALSAQRELPSSSRHPSTLENSSA), and 490 to 589 (FASD…VGLA). Composition is skewed to polar residues over residues 455–470 (LPSSSRHPSTLENSSA) and 490–509 (FASDQQDEAPTQNPAATQGE). Residues 523–536 (QGKGTGGQQRGGEG) are compositionally biased toward gly residues. Over residues 550-567 (VATSSQQEGSPATLQTAH) the composition is skewed to polar residues.

Belongs to the XK family.

It is found in the cell membrane. This Pan troglodytes (Chimpanzee) protein is XK-related protein 5.